A 152-amino-acid chain; its full sequence is Sec-independent protein translocase protein TatB (152 aa).

The helical transmembrane segment at 1-21 (MFDVAPSELLLVAVVALVVIG) threads the bilayer. Residues 60 to 71 (EDMEKRWAEENA) are compositionally biased toward basic and acidic residues. The tract at residues 60–152 (EDMEKRWAEE…KEADQQEKQS (93 aa)) is disordered. Composition is skewed to low complexity over residues 84 to 98 (TAST…PVSD) and 124 to 140 (AANH…STPA). Positions 141–152 (KPKEADQQEKQS) are enriched in basic and acidic residues.

This sequence belongs to the TatB family. As to quaternary structure, the Tat system comprises two distinct complexes: a TatABC complex, containing multiple copies of TatA, TatB and TatC subunits, and a separate TatA complex, containing only TatA subunits. Substrates initially bind to the TatABC complex, which probably triggers association of the separate TatA complex to form the active translocon.

It localises to the cell inner membrane. In terms of biological role, part of the twin-arginine translocation (Tat) system that transports large folded proteins containing a characteristic twin-arginine motif in their signal peptide across membranes. Together with TatC, TatB is part of a receptor directly interacting with Tat signal peptides. TatB may form an oligomeric binding site that transiently accommodates folded Tat precursor proteins before their translocation. The sequence is that of Sec-independent protein translocase protein TatB from Zymomonas mobilis subsp. mobilis (strain ATCC 31821 / ZM4 / CP4).